Here is a 166-residue protein sequence, read N- to C-terminus: MLELDLQVASETSAPDEARLRLWCEMGLRQRSADSELTIRLVDETEGRELNNTWRHKNYATNVLSFPADVPDDMLDIPLLGDLVICVPVVNREAVEQGKSVDAHWAHMVIHGCLHLLGYDHIDDEEAEEMEALERTLLEELGYPDPYADDESADPPHSDTPSKDHE.

Positions 111, 115, and 121 each coordinate Zn(2+). Residues 140 to 166 (ELGYPDPYADDESADPPHSDTPSKDHE) form a disordered region. The span at 154–166 (DPPHSDTPSKDHE) shows a compositional bias: basic and acidic residues.

This sequence belongs to the endoribonuclease YbeY family. Zn(2+) serves as cofactor.

The protein resides in the cytoplasm. Functionally, single strand-specific metallo-endoribonuclease involved in late-stage 70S ribosome quality control and in maturation of the 3' terminus of the 16S rRNA. This Pseudomonas syringae pv. syringae (strain B728a) protein is Endoribonuclease YbeY.